The sequence spans 213 residues: Adenylate kinase (213 aa).

10 to 15 (GSGKGT) lines the ATP pocket. The tract at residues 30–59 (SVGDLLRNIISSSSELGKKIKGTVESGNLI) is NMP. Residues R36, 57-59 (NLI), 83-86 (GFPR), and Q90 contribute to the AMP site. The tract at residues 125 to 160 (NRLACLDCKSIYSVSSFKSTTCAKCKSTRLEKRIDD) is LID. R126 lines the ATP pocket. 2 residues coordinate Zn(2+): C129 and C132. 135-136 (IY) is a binding site for ATP. Zn(2+) is bound by residues C146 and C149. AMP contacts are provided by R157 and R169. L195 provides a ligand contact to ATP.

It belongs to the adenylate kinase family. Monomer.

It is found in the cytoplasm. The enzyme catalyses AMP + ATP = 2 ADP. It participates in purine metabolism; AMP biosynthesis via salvage pathway; AMP from ADP: step 1/1. Catalyzes the reversible transfer of the terminal phosphate group between ATP and AMP. Plays an important role in cellular energy homeostasis and in adenine nucleotide metabolism. The polypeptide is Adenylate kinase (Wolbachia sp. subsp. Drosophila simulans (strain wRi)).